We begin with the raw amino-acid sequence, 100 residues long: NADH-quinone oxidoreductase subunit K (100 aa).

The next 3 helical transmembrane spans lie at 4–24, 28–48, and 60–80; these read LQHG…GLLI, LLFM…AFVV, and VMYI…LALL.

Belongs to the complex I subunit 4L family. As to quaternary structure, NDH-1 is composed of 13 different subunits. Subunits NuoA, H, J, K, L, M, N constitute the membrane sector of the complex.

The protein resides in the cell inner membrane. It catalyses the reaction a quinone + NADH + 5 H(+)(in) = a quinol + NAD(+) + 4 H(+)(out). Its function is as follows. NDH-1 shuttles electrons from NADH, via FMN and iron-sulfur (Fe-S) centers, to quinones in the respiratory chain. The immediate electron acceptor for the enzyme in this species is believed to be ubiquinone. Couples the redox reaction to proton translocation (for every two electrons transferred, four hydrogen ions are translocated across the cytoplasmic membrane), and thus conserves the redox energy in a proton gradient. The sequence is that of NADH-quinone oxidoreductase subunit K from Yersinia pseudotuberculosis serotype O:1b (strain IP 31758).